Here is a 71-residue protein sequence, read N- to C-terminus: uncharacterized protein (71 aa).

This is an uncharacterized protein from Archaeoglobus fulgidus (strain ATCC 49558 / DSM 4304 / JCM 9628 / NBRC 100126 / VC-16).